The following is a 282-amino-acid chain: ATP synthase gamma chain (282 aa).

This sequence belongs to the ATPase gamma chain family. As to quaternary structure, F-type ATPases have 2 components, CF(1) - the catalytic core - and CF(0) - the membrane proton channel. CF(1) has five subunits: alpha(3), beta(3), gamma(1), delta(1), epsilon(1). CF(0) has three main subunits: a, b and c.

It is found in the cell membrane. Produces ATP from ADP in the presence of a proton gradient across the membrane. The gamma chain is believed to be important in regulating ATPase activity and the flow of protons through the CF(0) complex. This Clostridium botulinum (strain Langeland / NCTC 10281 / Type F) protein is ATP synthase gamma chain.